Reading from the N-terminus, the 1052-residue chain is RTX-III toxin determinant A from serotype 8 (1052 aa).

3 consecutive transmembrane segments (helical) span residues 248–265 (GLDIISSLLSGVTASFAL), 275–334 (KVAA…LRVA), and 372–418 (DASI…GILE). Hemolysin-type calcium-binding repeat units follow at residues 744 to 761 (KGSKFRDIFHGADGDDLL), 762 to 779 (NGNDGDDILYGDKGNDEL), 780 to 797 (RGDNGNDQLYGGEGNDKL), 798 to 815 (LGGNGNNYLSGGDGNDEL), 826 to 843 (RGGKGDDKLYGSSGSDLL), and 844 to 861 (DGGEGNDYLEGGDGSDFY).

It belongs to the RTX prokaryotic toxin (TC 1.C.11) family. In terms of processing, palmitoylated by ApxIIIC. The toxin only becomes active when modified.

It is found in the secreted. It localises to the host cell membrane. In terms of biological role, does not have hemolytic activity but shows a strong cytotoxicity towards alveolar macrophages and neutrophils. The protein is RTX-III toxin determinant A from serotype 8 (apxIIIA) of Actinobacillus pleuropneumoniae (Haemophilus pleuropneumoniae).